Reading from the N-terminus, the 78-residue chain is LYR motif-containing protein 9 (78 aa).

This sequence belongs to the complex I LYR family. LYRM9 subfamily.

This chain is LYR motif-containing protein 9 (LYRM9), found in Branchiostoma floridae (Florida lancelet).